The primary structure comprises 449 residues: GTPase Der (449 aa).

EngA-type G domains lie at 3-167 and 175-350; these read SIVA…PDEP and TNIA…EQYS. Residues 9–16, 56–60, 119–122, 181–188, 228–232, and 293–296 contribute to the GTP site; these read GRPNVGKS, DTGGF, NKVD, DTAGI, and NKWD. Residues 351-435 form the KH-like domain; it reads RRVTTSELNR…PFRLLFRGRE (85 aa).

Belongs to the TRAFAC class TrmE-Era-EngA-EngB-Septin-like GTPase superfamily. EngA (Der) GTPase family. As to quaternary structure, associates with the 50S ribosomal subunit.

GTPase that plays an essential role in the late steps of ribosome biogenesis. This is GTPase Der from Trichlorobacter lovleyi (strain ATCC BAA-1151 / DSM 17278 / SZ) (Geobacter lovleyi).